Reading from the N-terminus, the 362-residue chain is tRNA/tmRNA (uracil-C(5))-methyltransferase (362 aa).

S-adenosyl-L-methionine contacts are provided by glutamine 186, tyrosine 214, asparagine 219, glutamate 235, and aspartate 295. Residue cysteine 320 is the Nucleophile of the active site. The active-site Proton acceptor is the glutamate 354.

It belongs to the class I-like SAM-binding methyltransferase superfamily. RNA M5U methyltransferase family. TrmA subfamily.

The enzyme catalyses uridine(54) in tRNA + S-adenosyl-L-methionine = 5-methyluridine(54) in tRNA + S-adenosyl-L-homocysteine + H(+). The catalysed reaction is uridine(341) in tmRNA + S-adenosyl-L-methionine = 5-methyluridine(341) in tmRNA + S-adenosyl-L-homocysteine + H(+). Its function is as follows. Dual-specificity methyltransferase that catalyzes the formation of 5-methyluridine at position 54 (m5U54) in all tRNAs, and that of position 341 (m5U341) in tmRNA (transfer-mRNA). This Stutzerimonas stutzeri (strain A1501) (Pseudomonas stutzeri) protein is tRNA/tmRNA (uracil-C(5))-methyltransferase.